The following is an 831-amino-acid chain: uncharacterized protein (831 aa).

The segment at 285-311 (ALNLKRQQLKEEQKEQQSTGDRSDVST) is disordered. 470–477 (GDTGNGKS) is a binding site for ATP.

This is an uncharacterized protein from Bacillus subtilis (strain 168).